The primary structure comprises 397 residues: Tryptophan synthase beta chain (397 aa).

Lys-91 carries the post-translational modification N6-(pyridoxal phosphate)lysine.

The protein belongs to the TrpB family. In terms of assembly, tetramer of two alpha and two beta chains. Pyridoxal 5'-phosphate is required as a cofactor.

The enzyme catalyses (1S,2R)-1-C-(indol-3-yl)glycerol 3-phosphate + L-serine = D-glyceraldehyde 3-phosphate + L-tryptophan + H2O. It participates in amino-acid biosynthesis; L-tryptophan biosynthesis; L-tryptophan from chorismate: step 5/5. In terms of biological role, the beta subunit is responsible for the synthesis of L-tryptophan from indole and L-serine. The chain is Tryptophan synthase beta chain from Bacillus cereus (strain G9842).